The sequence spans 628 residues: Siderophore iron transporter 1 (628 aa).

14 helical membrane-spanning segments follow: residues 68 to 88 (IYRV…GLDG), 107 to 127 (LLST…IFFA), 132 to 152 (IFGR…GTII), 164 to 184 (VGGC…EVIA), 194 to 214 (LLAL…SGNV), 225 to 245 (GIGM…ICML), 285 to 305 (IIGM…FTLA), 317 to 337 (IIVP…LWEI), 354 to 374 (GIFF…MQGD), 394 to 414 (ITSL…FILI), 420 to 440 (KPFI…LVHY), 448 to 468 (SGII…TYVT), 488 to 508 (LYLA…GAVW), and 559 to 579 (KILC…AFML).

Belongs to the major facilitator superfamily.

It is found in the endosome membrane. In terms of biological role, involved in the transport of siderophore ferrioxamine B and so has a role in iron homeostasis. This is Siderophore iron transporter 1 (SIT1) from Saccharomyces cerevisiae (strain ATCC 204508 / S288c) (Baker's yeast).